The sequence spans 323 residues: Calcium homeostasis modulator protein 2 (323 aa).

Residues 1–21 (MAALIAENFRFLSLFFKSKDV) are Cytoplasmic-facing. Residues 14 to 39 (LFFKSKDVMIFNGLVALGTVGSQELF) form a central pore region. Residues 22 to 43 (MIFNGLVALGTVGSQELFSVVA) form a helical membrane-spanning segment. The Extracellular portion of the chain corresponds to 44–52 (FHCPCSPAR). Intrachain disulfides connect Cys-46–Cys-130 and Cys-48–Cys-162. A helical transmembrane segment spans residues 53–76 (NYLYGLTAIGVPALALFLIGVILN). The Cytoplasmic segment spans residues 77–101 (NHTWNLVAECQYRRAKNCSAAPNFL). The helical transmembrane segment at 102-132 (LLSSILGRAAVAPVTWSVISLLRGEAYVCAL) threads the bilayer. The Extracellular portion of the chain corresponds to 133 to 179 (SEFVDPSSLTAGDKGFPPAHATEVLARFPCGEGPANLSSFREEVSRR). The interval 145–152 (DKGFPPAH) is hemichannel docking. The chain crosses the membrane as a helical span at residues 180-206 (LKYESQLFGWLLIGVVAILVFLTKCLK). Residues 207-323 (HYCSPLSYRQ…DNVEMALLTA (117 aa)) lie on the Cytoplasmic side of the membrane. The segment at 214 to 251 (YRQEAYWAQYRTNEDQLFQRTAEVHSRVLAANNVRRFF) is intersubunit interaction.

It belongs to the CALHM family. As to quaternary structure, homo-undecamer. Two undecameric hemichannels can assemble in a head-to-head manner to form a gap junction. In terms of tissue distribution, neuron, astrocyte, and microglia.

The protein resides in the cell membrane. It carries out the reaction ATP(in) = ATP(out). Its activity is regulated as follows. Inhibited by divalent cations such as Co(2+) and Ni(2+). Functionally, pore-forming subunit of Ca(2+) homeostasis modulator channels. Mediates ATP release from astrocytes and ATP-induced Ca(2+) influx in microglia thus regulating neuronal ATP and Ca(2+) homeostasis, synaptic transmission and neuroinflammatory response. May form intercellular gap junctions. The gating mechanism remains unknown. The polypeptide is Calcium homeostasis modulator protein 2 (Mus musculus (Mouse)).